The following is a 256-amino-acid chain: Protein Ta0487 (256 aa).

Belongs to the CinA family.

The chain is Protein Ta0487 from Thermoplasma acidophilum (strain ATCC 25905 / DSM 1728 / JCM 9062 / NBRC 15155 / AMRC-C165).